The sequence spans 77 residues: MKEQKLIHEGLITESLPNGMFRVRLDNEKMILGYVSGRIRRSFIRILPGDRVKIEVSRYDSTRGRIIYRLRNKDSND.

Positions 1–71 (MKEQKLIHEG…TRGRIIYRLR (71 aa)) constitute an S1-like domain.

This sequence belongs to the IF-1 family. In terms of assembly, component of the 30S ribosomal translation pre-initiation complex which assembles on the 30S ribosome in the order IF-2 and IF-3, IF-1 and N-formylmethionyl-tRNA(fMet); mRNA recruitment can occur at any time during PIC assembly.

The protein localises to the plastid. It is found in the chloroplast. Functionally, one of the essential components for the initiation of protein synthesis. Stabilizes the binding of IF-2 and IF-3 on the 30S subunit to which N-formylmethionyl-tRNA(fMet) subsequently binds. Helps modulate mRNA selection, yielding the 30S pre-initiation complex (PIC). Upon addition of the 50S ribosomal subunit IF-1, IF-2 and IF-3 are released leaving the mature 70S translation initiation complex. The chain is Translation initiation factor IF-1, chloroplastic from Ceratophyllum demersum (Rigid hornwort).